A 328-amino-acid chain; its full sequence is DNA-directed RNA polymerase subunit alpha (328 aa).

The interval 1-232 is alpha N-terminal domain (alpha-NTD); it reads MSTQGFLKPR…DQISVFAALE (232 aa). The tract at residues 248 to 328 is alpha C-terminal domain (alpha-CTD); the sequence is IDPVLLRPVD…NWPPLGLERP (81 aa).

This sequence belongs to the RNA polymerase alpha chain family. As to quaternary structure, homodimer. The RNAP catalytic core consists of 2 alpha, 1 beta, 1 beta' and 1 omega subunit. When a sigma factor is associated with the core the holoenzyme is formed, which can initiate transcription.

The catalysed reaction is RNA(n) + a ribonucleoside 5'-triphosphate = RNA(n+1) + diphosphate. Its function is as follows. DNA-dependent RNA polymerase catalyzes the transcription of DNA into RNA using the four ribonucleoside triphosphates as substrates. The protein is DNA-directed RNA polymerase subunit alpha of Bordetella petrii (strain ATCC BAA-461 / DSM 12804 / CCUG 43448).